Consider the following 523-residue polypeptide: 2-oxopropyl-CoM reductase, carboxylating (523 aa).

Residue 53-54 (AA) coordinates FAD. R56 is a binding site for 2-oxopropyl-coenzyme M. Residue S81 participates in FAD binding. Position 82 (C82) interacts with 2-oxopropyl-coenzyme M. C82 and C87 are disulfide-bonded. An FAD-binding site is contributed by A158. NADP(+) is bound by residues 222–225 (GSKT) and 245–246 (RT). An FAD-binding site is contributed by D353. Residue E360 coordinates NADP(+). M361 contributes to the FAD binding site. R365 is a binding site for 2-oxopropyl-coenzyme M. Position 501 (F501) interacts with FAD.

The protein belongs to the class-I pyridine nucleotide-disulfide oxidoreductase family. As to quaternary structure, homodimer. Component II of the aliphatic epoxide carboxylation complex together with components I, III and IV. The cofactor is FAD.

The catalysed reaction is coenzyme M + acetoacetate + NADP(+) = 2-oxopropyl-coenzyme M + CO2 + NADPH. Its pathway is alkene metabolism; propylene degradation. Inhibited (at 40%) by the coenzyme M analog 2-bromoethanesulfonate (BES). BES is a time-dependent inactivator of dithiothreitol-reduced 2-KPCC, where the redox active cysteines are in the free thiol forms. BES does not inactivate air-oxidized 2-KPCC, where the redox active cysteine pair is in the disulfide form. BES specifically alkylates the interchange thiol that facilitates thioether bond cleavage and enolacetone formation during catalysis. Involved in aliphatic epoxide carboxylation. Catalyzes the reductive cleavage of the thioether bond of 2-oxopropyl-coenzyme M (2-KPC), and the subsequent carboxylation of the ketopropyl cleavage product, yielding the products acetoacetate and free coenzyme M. The protein is 2-oxopropyl-CoM reductase, carboxylating of Xanthobacter autotrophicus (strain ATCC BAA-1158 / Py2).